The following is a 953-amino-acid chain: uncharacterized protein (953 aa).

A run of 11 helical transmembrane segments spans residues 23–43, 103–123, 148–168, 392–412, 435–455, 481–501, 540–560, 575–595, 599–619, 642–662, and 666–686; these read VVTS…AFLI, YLFI…PILL, GRYF…LYII, VSAI…VGMI, LLGL…MSFL, AYFA…SAAT, ISSG…LGAF, LSSM…VITF, IISP…YIAY, LFQT…LFAV, and WGPI…HLHL. The disordered stretch occupies residues 910–953; the sequence is VPPPYNDVKDEANGEANGEFDTASKENNPFADPKYKEEESRSAV. Residues 942–953 are compositionally biased toward basic and acidic residues; it reads PKYKEEESRSAV. A Phosphoserine modification is found at Ser949.

This sequence belongs to the CSC1 (TC 1.A.17) family.

The protein resides in the membrane. Acts as an osmosensitive calcium-permeable cation channel. This is an uncharacterized protein from Saccharomyces cerevisiae (strain ATCC 204508 / S288c) (Baker's yeast).